Consider the following 95-residue polypeptide: Aspartyl/glutamyl-tRNA(Asn/Gln) amidotransferase subunit C (95 aa).

Belongs to the GatC family. Heterotrimer of A, B and C subunits.

It carries out the reaction L-glutamyl-tRNA(Gln) + L-glutamine + ATP + H2O = L-glutaminyl-tRNA(Gln) + L-glutamate + ADP + phosphate + H(+). The catalysed reaction is L-aspartyl-tRNA(Asn) + L-glutamine + ATP + H2O = L-asparaginyl-tRNA(Asn) + L-glutamate + ADP + phosphate + 2 H(+). In terms of biological role, allows the formation of correctly charged Asn-tRNA(Asn) or Gln-tRNA(Gln) through the transamidation of misacylated Asp-tRNA(Asn) or Glu-tRNA(Gln) in organisms which lack either or both of asparaginyl-tRNA or glutaminyl-tRNA synthetases. The reaction takes place in the presence of glutamine and ATP through an activated phospho-Asp-tRNA(Asn) or phospho-Glu-tRNA(Gln). The sequence is that of Aspartyl/glutamyl-tRNA(Asn/Gln) amidotransferase subunit C from Xanthobacter autotrophicus (strain ATCC BAA-1158 / Py2).